Reading from the N-terminus, the 472-residue chain is Uronate isomerase (472 aa).

It belongs to the metallo-dependent hydrolases superfamily. Uronate isomerase family.

It catalyses the reaction D-glucuronate = D-fructuronate. It carries out the reaction aldehydo-D-galacturonate = keto-D-tagaturonate. The protein operates within carbohydrate metabolism; pentose and glucuronate interconversion. The polypeptide is Uronate isomerase (Halalkalibacterium halodurans (strain ATCC BAA-125 / DSM 18197 / FERM 7344 / JCM 9153 / C-125) (Bacillus halodurans)).